A 160-amino-acid chain; its full sequence is Surface-adhesin protein E (160 aa).

The first 15 residues, 1–15 (MKKIILTLSLGLLTA), serve as a signal peptide directing secretion. Cys-16 carries the N-palmitoyl cysteine lipid modification. The S-diacylglycerol cysteine moiety is linked to residue Cys-16. Positions 41–68 (IRLVKNVNYYIDSESIWVDNQEPQIVHF) are interaction with laminin and plasminogen. Residues 84–108 (PKRYARSVRQYKILNCANYHLTQVR) are interaction with vitronectin and epithelial cells.

Homodimer. Interacts with host vitronectin, laminin and plasminogen. Can interact with both immobilized and soluble vitronectin.

The protein localises to the cell outer membrane. The protein resides in the cell surface. Its function is as follows. Acts as a multifunctional adhesin involved in direct interactions with host epithelial cells and host proteins, including vitronectin, laminin and plasminogen. In addition, interaction with serum vitronectin plays an important role in bacterial serum resistance, and conversion of plasminogen to plasmin at the cell surface aids in immune evasion and contributes to bacterial virulence. Induces a pro-inflammatory epithelial cell response, leading to interleukin-8 (IL-8) secretion and up-regulation of ICAM1. In Haemophilus influenzae (strain NTHi 3655), this protein is Surface-adhesin protein E (pe).